The primary structure comprises 848 residues: Neuroligin-3 (848 aa).

Positions 1–37 (MWLRLGPPSLSLSPKPTVGRSLCLTLWFLSLALRAST) are cleaved as a signal peptide. Residues 38–709 (QAPAPTVNTH…NPRDYSTELS (672 aa)) are Extracellular-facing. Asparagine 98 carries N-linked (GlcNAc...) asparagine glycosylation. The cysteines at positions 106 and 141 are disulfide-linked. Residues 170–195 (RKGGSGAKKQGEDLADNDGDEDEDIR) form a disordered region. A compositionally biased stretch (acidic residues) spans 182 to 194 (DLADNDGDEDEDI). 2 cysteine pairs are disulfide-bonded: cysteine 340/cysteine 351 and cysteine 510/cysteine 544. A glycan (N-linked (GlcNAc...) asparagine) is linked at asparagine 545. Polar residues-rich tracts occupy residues 645-656 (TKVPPPDTTHSS) and 677-689 (AYSNENAQGSWNG). A disordered region spans residues 645 to 694 (TKVPPPDTTHSSHITRRPNGKTWSTKRPAISPAYSNENAQGSWNGDQDAG). Residues 710-730 (VTIAVGASLLFLNVLAFAALY) traverse the membrane as a helical segment. At 731-848 (YRKDKRRQEP…LPHSHSTTRV (118 aa)) the chain is on the cytoplasmic side. At serine 745 the chain carries Phosphoserine. Tyrosine 792 carries the phosphotyrosine modification.

Belongs to the type-B carboxylesterase/lipase family. In terms of assembly, homodimer, and heterodimer with NLGN1 and NLGN2. Interacts with neurexins NRXN1, NRXN2 and NRXN3. Interaction with neurexins is mediated by heparan sulfate glycan modification on neurexin. Interacts (via its C-terminus) with DLG4/PSD-95 (via PDZ domain 3). In terms of tissue distribution, expressed in the blood vessel walls (at protein level). Detected in throughout the brain and in spinal cord. Detected in brain, and at lower levels in pancreas islet beta cells.

It localises to the cell membrane. The protein localises to the synapse. Its function is as follows. Cell surface protein involved in cell-cell-interactions via its interactions with neurexin family members. Plays a role in synapse function and synaptic signal transmission, and may mediate its effects by clustering other synaptic proteins. May promote the initial formation of synapses, but is not essential for this. May also play a role in glia-glia or glia-neuron interactions in the developing peripheral nervous system. The sequence is that of Neuroligin-3 (NLGN3) from Homo sapiens (Human).